The chain runs to 196 residues: Large ribosomal subunit protein bL9 (196 aa).

The protein belongs to the bacterial ribosomal protein bL9 family.

Functionally, binds to the 23S rRNA. The polypeptide is Large ribosomal subunit protein bL9 (Gluconobacter oxydans (strain 621H) (Gluconobacter suboxydans)).